A 485-amino-acid chain; its full sequence is Glycogen synthase (485 aa).

ADP-alpha-D-glucose is bound at residue K15.

Belongs to the glycosyltransferase 1 family. Bacterial/plant glycogen synthase subfamily.

It carries out the reaction [(1-&gt;4)-alpha-D-glucosyl](n) + ADP-alpha-D-glucose = [(1-&gt;4)-alpha-D-glucosyl](n+1) + ADP + H(+). It participates in glycan biosynthesis; glycogen biosynthesis. Functionally, synthesizes alpha-1,4-glucan chains using ADP-glucose. The sequence is that of Glycogen synthase from Geobacillus thermodenitrificans (strain NG80-2).